We begin with the raw amino-acid sequence, 80 residues long: MTRIGVEPSLSDVEELLKQKGYDVVRIQNEQQMDQCDCYVVTGLDSNVLGISDTTTKASVITASGMTADEICQEVEQRVQ.

This sequence belongs to the UPF0180 family.

The chain is UPF0180 protein BPUM_1317 from Bacillus pumilus (strain SAFR-032).